The sequence spans 154 residues: Deoxyuridine 5'-triphosphate nucleotidohydrolase (154 aa).

Substrate contacts are provided by residues 64 to 66, Asn-77, 81 to 83, and Lys-91; these read RSG and TVD.

It belongs to the dUTPase family. As to quaternary structure, homotrimer. The cofactor is Mg(2+).

It catalyses the reaction dUTP + H2O = dUMP + diphosphate + H(+). It functions in the pathway pyrimidine metabolism; dUMP biosynthesis; dUMP from dCTP (dUTP route): step 2/2. Functionally, this enzyme is involved in nucleotide metabolism: it produces dUMP, the immediate precursor of thymidine nucleotides and it decreases the intracellular concentration of dUTP so that uracil cannot be incorporated into DNA. The chain is Deoxyuridine 5'-triphosphate nucleotidohydrolase from Mycobacterium leprae (strain Br4923).